The chain runs to 269 residues: Ribosomal RNA small subunit methyltransferase A (269 aa).

S-adenosyl-L-methionine contacts are provided by H12, L14, G39, E60, D81, and N103.

It belongs to the class I-like SAM-binding methyltransferase superfamily. rRNA adenine N(6)-methyltransferase family. RsmA subfamily.

The protein localises to the cytoplasm. It carries out the reaction adenosine(1518)/adenosine(1519) in 16S rRNA + 4 S-adenosyl-L-methionine = N(6)-dimethyladenosine(1518)/N(6)-dimethyladenosine(1519) in 16S rRNA + 4 S-adenosyl-L-homocysteine + 4 H(+). Specifically dimethylates two adjacent adenosines (A1518 and A1519) in the loop of a conserved hairpin near the 3'-end of 16S rRNA in the 30S particle. May play a critical role in biogenesis of 30S subunits. This chain is Ribosomal RNA small subunit methyltransferase A, found in Leptothrix cholodnii (strain ATCC 51168 / LMG 8142 / SP-6) (Leptothrix discophora (strain SP-6)).